The chain runs to 287 residues: 4-hydroxybenzoate octaprenyltransferase (287 aa).

The next 6 membrane-spanning stretches (helical) occupy residues 41–61 (VSLL…GCAI), 92–112 (VALA…LNAL), 133–153 (FFAI…PMAF), 160–180 (VPLL…AYDT), 197–217 (TSAL…YAVT), and 267–287 (NNWL…AQAF).

The protein belongs to the UbiA prenyltransferase family. Mg(2+) is required as a cofactor.

It is found in the cell inner membrane. The catalysed reaction is all-trans-octaprenyl diphosphate + 4-hydroxybenzoate = 4-hydroxy-3-(all-trans-octaprenyl)benzoate + diphosphate. It participates in cofactor biosynthesis; ubiquinone biosynthesis. Its function is as follows. Catalyzes the prenylation of para-hydroxybenzoate (PHB) with an all-trans polyprenyl group. Mediates the second step in the final reaction sequence of ubiquinone-8 (UQ-8) biosynthesis, which is the condensation of the polyisoprenoid side chain with PHB, generating the first membrane-bound Q intermediate 3-octaprenyl-4-hydroxybenzoate. In Paraburkholderia phymatum (strain DSM 17167 / CIP 108236 / LMG 21445 / STM815) (Burkholderia phymatum), this protein is 4-hydroxybenzoate octaprenyltransferase.